Reading from the N-terminus, the 315-residue chain is Tubulin beta-1 chain (315 aa).

GTP contacts are provided by serine 6, glycine 10, threonine 11, glycine 12, asparagine 72, and asparagine 94. Residues 295–315 are disordered; sequence DATADEEEYYEDEEEEEAQGM. The span at 297–315 shows a compositional bias: acidic residues; it reads TADEEEYYEDEEEEEAQGM.

It belongs to the tubulin family. In terms of assembly, dimer of alpha and beta chains. A typical microtubule is a hollow water-filled tube with an outer diameter of 25 nm and an inner diameter of 15 nM. Alpha-beta heterodimers associate head-to-tail to form protofilaments running lengthwise along the microtubule wall with the beta-tubulin subunit facing the microtubule plus end conferring a structural polarity. Microtubules usually have 13 protofilaments but different protofilament numbers can be found in some organisms and specialized cells. Requires Mg(2+) as cofactor.

It localises to the cytoplasm. It is found in the cytoskeleton. In terms of biological role, tubulin is the major constituent of microtubules, a cylinder consisting of laterally associated linear protofilaments composed of alpha- and beta-tubulin heterodimers. Microtubules grow by the addition of GTP-tubulin dimers to the microtubule end, where a stabilizing cap forms. Below the cap, tubulin dimers are in GDP-bound state, owing to GTPase activity of alpha-tubulin. This is Tubulin beta-1 chain (TUBB1) from Daucus carota (Wild carrot).